The primary structure comprises 123 residues: Large ribosomal subunit protein uL18 (123 aa).

This sequence belongs to the universal ribosomal protein uL18 family. Part of the 50S ribosomal subunit; part of the 5S rRNA/L5/L18/L25 subcomplex. Contacts the 5S and 23S rRNAs.

In terms of biological role, this is one of the proteins that bind and probably mediate the attachment of the 5S RNA into the large ribosomal subunit, where it forms part of the central protuberance. The sequence is that of Large ribosomal subunit protein uL18 from Chlamydia trachomatis serovar L2 (strain ATCC VR-902B / DSM 19102 / 434/Bu).